Here is a 339-residue protein sequence, read N- to C-terminus: Undecaprenyl-phosphate 4-deoxy-4-formamido-L-arabinose transferase (339 aa).

Transmembrane regions (helical) follow at residues leucine 235–valine 255 and leucine 269–leucine 289.

It belongs to the glycosyltransferase 2 family.

The protein resides in the cell inner membrane. The catalysed reaction is UDP-4-deoxy-4-formamido-beta-L-arabinose + di-trans,octa-cis-undecaprenyl phosphate = 4-deoxy-4-formamido-alpha-L-arabinopyranosyl di-trans,octa-cis-undecaprenyl phosphate + UDP. Its pathway is glycolipid biosynthesis; 4-amino-4-deoxy-alpha-L-arabinose undecaprenyl phosphate biosynthesis; 4-amino-4-deoxy-alpha-L-arabinose undecaprenyl phosphate from UDP-4-deoxy-4-formamido-beta-L-arabinose and undecaprenyl phosphate: step 1/2. It participates in bacterial outer membrane biogenesis; lipopolysaccharide biosynthesis. Its function is as follows. Catalyzes the transfer of 4-deoxy-4-formamido-L-arabinose from UDP to undecaprenyl phosphate. The modified arabinose is attached to lipid A and is required for resistance to polymyxin and cationic antimicrobial peptides. This chain is Undecaprenyl-phosphate 4-deoxy-4-formamido-L-arabinose transferase, found in Pseudomonas aeruginosa (strain LESB58).